A 431-amino-acid polypeptide reads, in one-letter code: Putative F-box/FBD/LRR-repeat protein At3g56780 (431 aa).

An F-box domain is found at 6–62; it reads CSCINELPDDLILKILSFVSTKHVVVTSLLSKKWKSLWTRVPILKYDVRDHTRFERF. LRR repeat units follow at residues 56-82, 88-113, 135-161, 162-187, 209-236, 237-262, 264-285, and 357-382; these read HTRF…HVEL, NKDI…EIDA, LKGI…HIDH, SSLF…MVIR, LEGL…HVAR, MEDF…TLEE, TSDV…SIIT, and CSER…KLEH. In terms of domain architecture, FBD spans 391–423; the sequence is RWEPPSLVPECLLSSLEALEWKGYTGRYGDKDL.

In Arabidopsis thaliana (Mouse-ear cress), this protein is Putative F-box/FBD/LRR-repeat protein At3g56780.